Reading from the N-terminus, the 354-residue chain is Inactive ADP-ribosyltransferase ARH2 (354 aa).

Residue serine 27 is modified to Phosphoserine.

This sequence belongs to the ADP-ribosylglycohydrolase family.

The protein resides in the cytoplasm. It is found in the myofibril. Its subcellular location is the sarcomere. In terms of biological role, required for myofibril assembly and outgrowth of the cardiac chambers in the developing heart. Appears to be catalytically inactive, showing no activity against O-acetyl-ADP-ribose. The protein is Inactive ADP-ribosyltransferase ARH2 (ADPRHL1) of Homo sapiens (Human).